A 492-amino-acid polypeptide reads, in one-letter code: ATP synthase subunit beta, plastid (492 aa).

170-177 serves as a coordination point for ATP; it reads GGAGVGKT.

Belongs to the ATPase alpha/beta chains family. As to quaternary structure, F-type ATPases have 2 components, CF(1) - the catalytic core - and CF(0) - the membrane proton channel. CF(1) has five subunits: alpha(3), beta(3), gamma(1), delta(1), epsilon(1). CF(0) has four main subunits: a(1), b(1), b'(1) and c(9-12).

The protein localises to the plastid membrane. The catalysed reaction is ATP + H2O + 4 H(+)(in) = ADP + phosphate + 5 H(+)(out). In terms of biological role, produces ATP from ADP in the presence of a proton gradient across the membrane. The catalytic sites are hosted primarily by the beta subunits. The polypeptide is ATP synthase subunit beta, plastid (Aneura mirabilis (Parasitic liverwort)).